The primary structure comprises 139 residues: Large ribosomal subunit protein uL16 (139 aa).

The disordered stretch occupies residues 1 to 21 (MLMPKRVQYRKTQRGRMKGNA). Residues 7–17 (VQYRKTQRGRM) show a composition bias toward basic residues.

It belongs to the universal ribosomal protein uL16 family. Part of the 50S ribosomal subunit.

Functionally, binds 23S rRNA and is also seen to make contacts with the A and possibly P site tRNAs. This chain is Large ribosomal subunit protein uL16, found in Chlorobaculum tepidum (strain ATCC 49652 / DSM 12025 / NBRC 103806 / TLS) (Chlorobium tepidum).